The primary structure comprises 292 residues: Sulfofructosephosphate aldolase (292 aa).

Lysine 193 (schiff-base intermediate with substrate) is an active-site residue.

This sequence belongs to the aldolase LacD family. Homotetramer.

It catalyses the reaction 6-deoxy-6-sulfo-D-fructose 1-phosphate = (2S)-3-sulfolactaldehyde + dihydroxyacetone phosphate. Cleaves 6-deoxy-6-sulfo-D-fructose 1-phosphate (SFP) to form dihydroxyacetone phosphate (DHAP) and 3-sulfolactaldehyde (SLA). The polypeptide is Sulfofructosephosphate aldolase (yihT) (Escherichia coli (strain K12)).